The primary structure comprises 454 residues: Histidine--tRNA ligase (454 aa).

Belongs to the class-II aminoacyl-tRNA synthetase family. In terms of assembly, homodimer.

Its subcellular location is the cytoplasm. It carries out the reaction tRNA(His) + L-histidine + ATP = L-histidyl-tRNA(His) + AMP + diphosphate + H(+). The sequence is that of Histidine--tRNA ligase from Bacteroides fragilis (strain YCH46).